Consider the following 107-residue polypeptide: Period circadian protein (107 aa).

Positions 81–107 are disordered; sequence ITNGSNTGTGTSSGSFQPPLLTEALLN. A compositionally biased stretch (low complexity) spans 82–95; the sequence is TNGSNTGTGTSSGS.

Forms a heterodimer with timeless (TIM); the complex then translocates into the nucleus. Post-translationally, phosphorylated with a circadian rhythmicity, probably by the double-time protein (dbt). Phosphorylation could be implicated in the stability of per monomer and in the formation of heterodimer per-tim.

It is found in the nucleus. The protein resides in the cytoplasm. The protein localises to the perinuclear region. Essential for biological clock functions. Determines the period length of circadian and ultradian rhythms; an increase in PER dosage leads to shortened circadian rhythms and a decrease leads to lengthened circadian rhythms. Essential for the circadian rhythmicity of locomotor activity, eclosion behavior, and for the rhythmic component of the male courtship song that originates in the thoracic nervous system. The biological cycle depends on the rhythmic formation and nuclear localization of the TIM-PER complex. Light induces the degradation of TIM, which promotes elimination of PER. Nuclear activity of the heterodimer coordinatively regulates PER and TIM transcription through a negative feedback loop. Behaves as a negative element in circadian transcriptional loop. Does not appear to bind DNA, suggesting indirect transcriptional inhibition. The polypeptide is Period circadian protein (per) (Beris vallata (Common orange legionnaire)).